The primary structure comprises 344 residues: Phenylalanine--tRNA ligase alpha subunit (344 aa).

E255 serves as a coordination point for Mg(2+).

Belongs to the class-II aminoacyl-tRNA synthetase family. Phe-tRNA synthetase alpha subunit type 1 subfamily. Tetramer of two alpha and two beta subunits. Mg(2+) serves as cofactor.

It is found in the cytoplasm. The catalysed reaction is tRNA(Phe) + L-phenylalanine + ATP = L-phenylalanyl-tRNA(Phe) + AMP + diphosphate + H(+). The sequence is that of Phenylalanine--tRNA ligase alpha subunit from Cytophaga hutchinsonii (strain ATCC 33406 / DSM 1761 / CIP 103989 / NBRC 15051 / NCIMB 9469 / D465).